Consider the following 197-residue polypeptide: Inner membrane-spanning protein YciB (197 aa).

A run of 5 helical transmembrane segments spans residues 36 to 56, 64 to 84, 90 to 110, 135 to 155, and 162 to 182; these read IYSATAMLIISSLVVYGALFL, GQWLTLIACLVFGGLTLTFHS, WKAPVVNWLFALGFAGSHFIG, LAWIAFFLFCGAANLFVAFTF, and FKVFGSLGMTVIFLVAQGVYL.

Belongs to the YciB family.

The protein resides in the cell inner membrane. Functionally, plays a role in cell envelope biogenesis, maintenance of cell envelope integrity and membrane homeostasis. The sequence is that of Inner membrane-spanning protein YciB from Pseudomonas putida (strain ATCC 700007 / DSM 6899 / JCM 31910 / BCRC 17059 / LMG 24140 / F1).